Consider the following 322-residue polypeptide: Serine/threonine-protein phosphatase PP1 isozyme 6 (322 aa).

N-acetylmethionine is present on M1. The Mn(2+) site is built by D61, H63, D89, and N121. H122 (proton donor) is an active-site residue. Mn(2+)-binding residues include H170 and H245. The disordered stretch occupies residues 303-322 (GFNNNVPRPGTPPHKGGKGR).

Belongs to the PPP phosphatase family. PP-1 subfamily. Mn(2+) is required as a cofactor. Strongly up-regulated within developing flowers, especially in the tapetum, the developing and mature pollen and in the ovaries.

It is found in the nucleus. Its subcellular location is the cytoplasm. The catalysed reaction is O-phospho-L-seryl-[protein] + H2O = L-seryl-[protein] + phosphate. It catalyses the reaction O-phospho-L-threonyl-[protein] + H2O = L-threonyl-[protein] + phosphate. Its activity is regulated as follows. Phosphatase activity is strongly reduced by the protein phosphatase inhibitor 2 (I-2). Serine/threonine-protein phosphatase that possesses phosphatase activity toward para-nitrophenyl phosphate (pNPP) in vitro. The sequence is that of Serine/threonine-protein phosphatase PP1 isozyme 6 from Arabidopsis thaliana (Mouse-ear cress).